The sequence spans 267 residues: Glucosamine-6-phosphate deaminase (267 aa).

The Proton acceptor; for enolization step role is filled by Asp-72. Asp-141 functions as the For ring-opening step in the catalytic mechanism. Catalysis depends on His-143, which acts as the Proton acceptor; for ring-opening step. Glu-148 (for ring-opening step) is an active-site residue.

It belongs to the glucosamine/galactosamine-6-phosphate isomerase family. NagB subfamily. In terms of assembly, homohexamer.

The catalysed reaction is alpha-D-glucosamine 6-phosphate + H2O = beta-D-fructose 6-phosphate + NH4(+). Its pathway is amino-sugar metabolism; N-acetylneuraminate degradation; D-fructose 6-phosphate from N-acetylneuraminate: step 5/5. Its activity is regulated as follows. Allosterically activated by N-acetylglucosamine 6-phosphate (GlcNAc6P). Its function is as follows. Catalyzes the reversible isomerization-deamination of glucosamine 6-phosphate (GlcN6P) to form fructose 6-phosphate (Fru6P) and ammonium ion. The chain is Glucosamine-6-phosphate deaminase from Actinobacillus pleuropneumoniae serotype 5b (strain L20).